The sequence spans 168 residues: Photosystem I assembly protein Ycf3 (168 aa).

TPR repeat units lie at residues 35 to 68 (AFTY…EMDP), 72 to 105 (SYIL…NPFL), and 120 to 153 (GEQA…TPGN).

The protein belongs to the Ycf3 family.

It localises to the plastid. The protein resides in the chloroplast thylakoid membrane. Essential for the assembly of the photosystem I (PSI) complex. May act as a chaperone-like factor to guide the assembly of the PSI subunits. The sequence is that of Photosystem I assembly protein Ycf3 from Plantago lanceolata (English plantain).